A 379-amino-acid chain; its full sequence is Alanine racemase (379 aa).

K37 serves as the catalytic Proton acceptor; specific for D-alanine. K37 is modified (N6-(pyridoxal phosphate)lysine). R139 is a substrate binding site. The active-site Proton acceptor; specific for L-alanine is the Y266. M314 is a binding site for substrate.

Belongs to the alanine racemase family. Pyridoxal 5'-phosphate serves as cofactor.

It catalyses the reaction L-alanine = D-alanine. It functions in the pathway amino-acid biosynthesis; D-alanine biosynthesis; D-alanine from L-alanine: step 1/1. Functionally, catalyzes the interconversion of L-alanine and D-alanine. May also act on other amino acids. This chain is Alanine racemase (alr), found in Sorangium cellulosum (strain So ce56) (Polyangium cellulosum (strain So ce56)).